The primary structure comprises 128 residues: MVLPASMRLRGHRCFSRLHRSQRRHHGKWMVLRQIKRDRTLLRSELRSQHDTTCRCALVISNKVSKRAVRRNRLRRLLHNHLRQRLEQRTDLAGTWLLFSLRPDAAEAEPAQLLEECDSLLKIAGLER.

It belongs to the RnpA family. Consists of a catalytic RNA component (M1 or rnpB) and a protein subunit.

It catalyses the reaction Endonucleolytic cleavage of RNA, removing 5'-extranucleotides from tRNA precursor.. Functionally, RNaseP catalyzes the removal of the 5'-leader sequence from pre-tRNA to produce the mature 5'-terminus. It can also cleave other RNA substrates such as 4.5S RNA. The protein component plays an auxiliary but essential role in vivo by binding to the 5'-leader sequence and broadening the substrate specificity of the ribozyme. The protein is Ribonuclease P protein component of Synechococcus sp. (strain CC9902).